The chain runs to 313 residues: Ribosomal RNA small subunit methyltransferase H (313 aa).

S-adenosyl-L-methionine is bound by residues Gly-35–His-37, Asp-55, Phe-81, Asp-103, and Gln-110.

It belongs to the methyltransferase superfamily. RsmH family.

The protein localises to the cytoplasm. The enzyme catalyses cytidine(1402) in 16S rRNA + S-adenosyl-L-methionine = N(4)-methylcytidine(1402) in 16S rRNA + S-adenosyl-L-homocysteine + H(+). Functionally, specifically methylates the N4 position of cytidine in position 1402 (C1402) of 16S rRNA. This chain is Ribosomal RNA small subunit methyltransferase H, found in Azotobacter vinelandii (strain DJ / ATCC BAA-1303).